The following is a 534-amino-acid chain: MTATSELDDSFHVFDTTLRDGAQREGINLTVADKLAIARHLDDFGVGFIEGGWPGANPRDTEFFARARQEIDFKHAQLVAFGSTRRAGANAAEDHQVKALLDSGAQVITLVAKSHDRHVELALRTTLDENLAMVADTVSHLKAQGRRVFVDCEHFFDGYRANPEYAKSVVRTASEAGADVVVLCDTNGGMLPAQIQAVVATVLADTGARLGIHAQDDTGCAVANTLAAVDAGATHVQCTANGYGERVGNANLFPVVAALELKYGKQVLPEGRLREMTRISHAIAEVVNLTPSTHQPYVGVSAFAHKAGLHASAIKVDPDLYQHIDPELVGNTMRMLVSDMAGRASIELKGKELGIDLGGDRELVGRVVERVKERELAGYTYEAADASFELLLRAEAEGRPLKYFEVESWRAITEDRPDGSHANEATVKLWAKGERIVATAEGNGPVNALDRSLRVALEKIYPELAKLDLVDYKVRILEGVHGTQSTTRVLISTSDGTGEWATVGVAENVIAASWQALEDAYTYGLLRAGVAPAE.

Residues 11–274 (FHVFDTTLRD…KQVLPEGRLR (264 aa)) form the Pyruvate carboxyltransferase domain.

The protein belongs to the alpha-IPM synthase/homocitrate synthase family.

It carries out the reaction pyruvate + acetyl-CoA + H2O = (3R)-citramalate + CoA + H(+). It participates in amino-acid biosynthesis; L-isoleucine biosynthesis; 2-oxobutanoate from pyruvate: step 1/3. Catalyzes the condensation of pyruvate and acetyl-coenzyme A to form (R)-citramalate. The sequence is that of (R)-citramalate synthase from Streptomyces coelicolor (strain ATCC BAA-471 / A3(2) / M145).